The primary structure comprises 121 residues: Ragulator complex protein LAMTOR4 homolog (121 aa).

The disordered stretch occupies residues 91–121 (TQNGATTSSSSSTSYNDAAEGNNISSSTVLA). Polar residues predominate over residues 112-121 (NNISSSTVLA).

Belongs to the LAMTOR4 family. As to quaternary structure, part of the Ragulator complex.

The protein localises to the lysosome. Functionally, regulator of the TOR pathway, a signaling cascade that promotes cell growth in response to growth factors, energy levels, and amino acids. As part of the Ragulator complex, may activate the TOR signaling cascade in response to amino acids. This chain is Ragulator complex protein LAMTOR4 homolog, found in Drosophila pseudoobscura pseudoobscura (Fruit fly).